The primary structure comprises 87 residues: MARITVEDCLTNMDNRFQLVLVAAKRARQLSMGHQPRVAEENDKPTVIALREIADGHVGREVLDEVVAEEHAAVSSRISEDEVRAEL.

Belongs to the RNA polymerase subunit omega family. As to quaternary structure, the RNAP catalytic core consists of 2 alpha, 1 beta, 1 beta' and 1 omega subunit. When a sigma factor is associated with the core the holoenzyme is formed, which can initiate transcription.

It catalyses the reaction RNA(n) + a ribonucleoside 5'-triphosphate = RNA(n+1) + diphosphate. In terms of biological role, promotes RNA polymerase assembly. Latches the N- and C-terminal regions of the beta' subunit thereby facilitating its interaction with the beta and alpha subunits. The chain is DNA-directed RNA polymerase subunit omega from Thioalkalivibrio sulfidiphilus (strain HL-EbGR7).